Consider the following 49-residue polypeptide: Large ribosomal subunit protein bL33 (49 aa).

Belongs to the bacterial ribosomal protein bL33 family.

This Desulforudis audaxviator (strain MP104C) protein is Large ribosomal subunit protein bL33.